We begin with the raw amino-acid sequence, 278 residues long: Small ribosomal subunit protein uS2 (278 aa).

Disordered regions lie at residues 216 to 235 and 250 to 278; these read EAAA…TQWD and NFAA…EWTN. Residues 256 to 278 are compositionally biased toward low complexity; that stretch reads ADGNWGATTGGDWAAAGGEEWTN.

The protein belongs to the universal ribosomal protein uS2 family. As to quaternary structure, component of the small ribosomal subunit. Mature ribosomes consist of a small (40S) and a large (60S) subunit. The 40S subunit contains about 33 different proteins and 1 molecule of RNA (18S). The 60S subunit contains about 49 different proteins and 3 molecules of RNA (25S, 5.8S and 5S). Interacts with ribosomal protein S21.

It is found in the cytoplasm. In terms of biological role, required for the assembly and/or stability of the 40S ribosomal subunit. Required for the processing of the 20S rRNA-precursor to mature 18S rRNA in a late step of the maturation of 40S ribosomal subunits. This chain is Small ribosomal subunit protein uS2, found in Monosiga brevicollis (Choanoflagellate).